The primary structure comprises 406 residues: 2,3-diketo-5-methylthiopentyl-1-phosphate enolase (406 aa).

Lys-94 acts as the Proton acceptor in catalysis. Substrate-binding positions include Lys-143, 169–172, His-260, Gly-332, and 354–355; these read KDDE and GG. The Mg(2+) site is built by Lys-169, Asp-171, and Glu-172. N6-carboxylysine is present on Lys-169.

The protein belongs to the RuBisCO large chain family. Type IV subfamily. Homodimer. The cofactor is Mg(2+).

It catalyses the reaction 5-methylsulfanyl-2,3-dioxopentyl phosphate = 2-hydroxy-5-methylsulfanyl-3-oxopent-1-enyl phosphate. Its pathway is amino-acid biosynthesis; L-methionine biosynthesis via salvage pathway; L-methionine from S-methyl-5-thio-alpha-D-ribose 1-phosphate: step 3/6. Its function is as follows. Catalyzes the enolization of 2,3-diketo-5-methylthiopentyl-1-phosphate (DK-MTP-1-P) into 2-hydroxy-3-keto-5-methylthiopentenyl-1-phosphate (HK-MTPenyl-1-P). The protein is 2,3-diketo-5-methylthiopentyl-1-phosphate enolase of Bacillus pumilus (strain SAFR-032).